Consider the following 182-residue polypeptide: ATP-dependent protease subunit HslV (182 aa).

The active site involves Thr10. Residues Ala164, Cys167, and Thr170 each contribute to the Na(+) site.

It belongs to the peptidase T1B family. HslV subfamily. A double ring-shaped homohexamer of HslV is capped on each side by a ring-shaped HslU homohexamer. The assembly of the HslU/HslV complex is dependent on binding of ATP.

It localises to the cytoplasm. It carries out the reaction ATP-dependent cleavage of peptide bonds with broad specificity.. Allosterically activated by HslU binding. In terms of biological role, protease subunit of a proteasome-like degradation complex believed to be a general protein degrading machinery. This chain is ATP-dependent protease subunit HslV, found in Chelativorans sp. (strain BNC1).